The sequence spans 347 residues: Phenylalanine--tRNA ligase alpha subunit (347 aa).

Glutamate 262 serves as a coordination point for Mg(2+).

This sequence belongs to the class-II aminoacyl-tRNA synthetase family. Phe-tRNA synthetase alpha subunit type 1 subfamily. In terms of assembly, tetramer of two alpha and two beta subunits. The cofactor is Mg(2+).

The protein localises to the cytoplasm. It carries out the reaction tRNA(Phe) + L-phenylalanine + ATP = L-phenylalanyl-tRNA(Phe) + AMP + diphosphate + H(+). The polypeptide is Phenylalanine--tRNA ligase alpha subunit (Roseiflexus sp. (strain RS-1)).